A 141-amino-acid chain; its full sequence is Vesicle-associated membrane protein 4 (141 aa).

Residues 1–51 (MPPKFKRHLNDDDVTGSVKSERRNLLEDDSDEEEDFFLRGPSGPRFGPRND) form a disordered region. Over 1–115 (MPPKFKRHLN…RRQMWWRGCK (115 aa)) the chain is Cytoplasmic. Ser-17 and Ser-30 each carry phosphoserine. The v-SNARE coiled-coil homology domain occupies 52–112 (KIKHVQNQVD…KQLRRQMWWR (61 aa)). The helical; Anchor for type IV membrane protein transmembrane segment at 116 to 136 (IKAIMALVAVILLLVIIILIV) threads the bilayer. Residues 137–141 (VKYRT) lie on the Vesicular side of the membrane.

This sequence belongs to the synaptobrevin family. In terms of assembly, identified in a complex containing STX6, STX12, VAMP4 and VTI1A. Interacts with BAIAP3; this interaction is increased in the presence of calcium.

It is found in the golgi apparatus. Its subcellular location is the trans-Golgi network membrane. Involved in the pathway that functions to remove an inhibitor (probably synaptotagmin-4) of calcium-triggered exocytosis during the maturation of secretory granules. May be a marker for this sorting pathway that is critical for remodeling the secretory response of granule. This chain is Vesicle-associated membrane protein 4 (VAMP4), found in Bos taurus (Bovine).